Consider the following 619-residue polypeptide: Magnesium-chelatase 67 kDa subunit (619 aa).

Residue 33-40 (STVGSGKS) participates in ATP binding. The segment at 273–321 (TRMPEREPSEEEMQQEEPPPPEEQPEQEGEDENAPPDETDSDADEEQEE) is disordered. Over residues 280-321 (PSEEEMQQEEPPPPEEQPEQEGEDENAPPDETDSDADEEQEE) the composition is skewed to acidic residues. The region spanning 431-619 (LFIFMVDASG…AEQIVEAALS (189 aa)) is the VWFA domain.

Belongs to the Mg-chelatase subunits D/I family.

It catalyses the reaction protoporphyrin IX + Mg(2+) + ATP + H2O = Mg-protoporphyrin IX + ADP + phosphate + 3 H(+). It functions in the pathway porphyrin-containing compound metabolism; bacteriochlorophyll biosynthesis. Involved in bacteriochlorophyll biosynthesis; introduces a magnesium ion into protoporphyrin IX to yield Mg-protoporphyrin IX. The chain is Magnesium-chelatase 67 kDa subunit (bchD) from Chlorobaculum parvum (strain DSM 263 / NCIMB 8327) (Chlorobium vibrioforme subsp. thiosulfatophilum).